The sequence spans 358 residues: Peptide chain release factor 1 (358 aa).

N5-methylglutamine is present on glutamine 234.

Belongs to the prokaryotic/mitochondrial release factor family. Methylated by PrmC. Methylation increases the termination efficiency of RF1.

It localises to the cytoplasm. Peptide chain release factor 1 directs the termination of translation in response to the peptide chain termination codons UAG and UAA. This is Peptide chain release factor 1 from Chloroherpeton thalassium (strain ATCC 35110 / GB-78).